A 101-amino-acid polypeptide reads, in one-letter code: Ferredoxin-3 (101 aa).

4Fe-4S ferredoxin-type domains follow at residues 17–46 (YLMKIDEQKCIGCGRCFKVCGRDVMSLHGL) and 70–100 (KVMALTGAENCIGCGACARVCPSECQTHAAL). 8 residues coordinate [4Fe-4S] cluster: Cys26, Cys29, Cys32, Cys36, Cys80, Cys83, Cys86, and Cys90.

Homodimer. [4Fe-4S] cluster is required as a cofactor.

Ferredoxins are iron-sulfur proteins that transfer electrons in a wide variety of metabolic reactions. The polypeptide is Ferredoxin-3 (fdxB) (Rhodobacter capsulatus (Rhodopseudomonas capsulata)).